A 555-amino-acid polypeptide reads, in one-letter code: CTL-like protein DDB_G0274487 (555 aa).

The span at 1-17 (MGIEDNSQQPNTGSPYG) shows a compositional bias: polar residues. The interval 1–101 (MGIEDNSQQP…NLNKANDRES (101 aa)) is disordered. A compositionally biased stretch (low complexity) spans 19-63 (SPPSQYNPYGQQPPQQQQYNPYGEQQQQPQQQQQYGYQPQFQPTY). The segment covering 79–90 (PFPPQQQQPPPI) has biased composition (pro residues). Asn-116 is a glycosylation site (N-linked (GlcNAc...) asparagine). A helical transmembrane segment spans residues 138–158 (IWFSILFGLNFGLLIVVSASA). An N-linked (GlcNAc...) asparagine glycan is attached at Asn-174. 10 helical membrane passes run 182–202 (FLFA…WAWL), 210–230 (ESLI…YCVF), 231–251 (FFVW…FFII), 284–304 (AGYV…SAFA), 313–333 (AIQT…FHVI), 340–360 (TVSG…VGMP), 372–392 (LTTS…IETL), 405–425 (VVVK…SSIV), 472–492 (IAIG…LISI), and 493–513 (PFDM…LVII).

This sequence belongs to the CTL (choline transporter-like) family.

It localises to the membrane. The sequence is that of CTL-like protein DDB_G0274487 from Dictyostelium discoideum (Social amoeba).